Consider the following 249-residue polypeptide: DNA polymerase sliding clamp 1 (249 aa).

The protein belongs to the PCNA family. Homotrimer. The subunits circularize to form a toroid; DNA passes through its center. Replication factor C (RFC) is required to load the toroid on the DNA. Interacts with TIP.

With respect to regulation, inhibited by interaction with the PCNA inhibitor TIP. Its function is as follows. Sliding clamp subunit that acts as a moving platform for DNA processing. Responsible for tethering the catalytic subunit of DNA polymerase and other proteins to DNA during high-speed replication. The chain is DNA polymerase sliding clamp 1 from Thermococcus kodakarensis (strain ATCC BAA-918 / JCM 12380 / KOD1) (Pyrococcus kodakaraensis (strain KOD1)).